Reading from the N-terminus, the 267-residue chain is 4-hydroxy-tetrahydrodipicolinate reductase (267 aa).

NAD(+) contacts are provided by residues 8 to 13 (GAAGRM) and Asp34. Arg35 serves as a coordination point for NADP(+). Residues 98-100 (GTT) and 122-125 (AANF) each bind NAD(+). His155 serves as the catalytic Proton donor/acceptor. His156 provides a ligand contact to (S)-2,3,4,5-tetrahydrodipicolinate. Lys159 acts as the Proton donor in catalysis. (S)-2,3,4,5-tetrahydrodipicolinate is bound at residue 165-166 (GT).

Belongs to the DapB family.

It is found in the cytoplasm. The enzyme catalyses (S)-2,3,4,5-tetrahydrodipicolinate + NAD(+) + H2O = (2S,4S)-4-hydroxy-2,3,4,5-tetrahydrodipicolinate + NADH + H(+). It carries out the reaction (S)-2,3,4,5-tetrahydrodipicolinate + NADP(+) + H2O = (2S,4S)-4-hydroxy-2,3,4,5-tetrahydrodipicolinate + NADPH + H(+). The protein operates within amino-acid biosynthesis; L-lysine biosynthesis via DAP pathway; (S)-tetrahydrodipicolinate from L-aspartate: step 4/4. Catalyzes the conversion of 4-hydroxy-tetrahydrodipicolinate (HTPA) to tetrahydrodipicolinate. The sequence is that of 4-hydroxy-tetrahydrodipicolinate reductase from Pseudomonas entomophila (strain L48).